Here is a 165-residue protein sequence, read N- to C-terminus: Cytochrome b6-f complex subunit 4 (165 aa).

3 helical membrane passes run 36 to 56 (LLYI…GLAV), 95 to 115 (LLGV…PFLE), and 131 to 151 (TVFL…TLPI).

It belongs to the cytochrome b family. PetD subfamily. The 4 large subunits of the cytochrome b6-f complex are cytochrome b6, subunit IV (17 kDa polypeptide, petD), cytochrome f and the Rieske protein, while the 4 small subunits are petG, petL, petM and petN. The complex functions as a dimer.

Its subcellular location is the plastid. The protein resides in the chloroplast thylakoid membrane. Component of the cytochrome b6-f complex, which mediates electron transfer between photosystem II (PSII) and photosystem I (PSI), cyclic electron flow around PSI, and state transitions. The chain is Cytochrome b6-f complex subunit 4 from Populus alba (White poplar).